Reading from the N-terminus, the 238-residue chain is Purine nucleoside phosphorylase DeoD-type (238 aa).

His-4 serves as a coordination point for a purine D-ribonucleoside. Residues Gly-20, Arg-24, Arg-43, and Arg-87 to Ser-90 each bind phosphate. Residues Glu-179–Glu-181 and Ser-203–Asp-204 each bind a purine D-ribonucleoside. Catalysis depends on Asp-204, which acts as the Proton donor.

This sequence belongs to the PNP/UDP phosphorylase family. As to quaternary structure, homohexamer; trimer of homodimers.

It carries out the reaction a purine D-ribonucleoside + phosphate = a purine nucleobase + alpha-D-ribose 1-phosphate. The enzyme catalyses a purine 2'-deoxy-D-ribonucleoside + phosphate = a purine nucleobase + 2-deoxy-alpha-D-ribose 1-phosphate. In terms of biological role, catalyzes the reversible phosphorolytic breakdown of the N-glycosidic bond in the beta-(deoxy)ribonucleoside molecules, with the formation of the corresponding free purine bases and pentose-1-phosphate. This chain is Purine nucleoside phosphorylase DeoD-type, found in Haemophilus ducreyi (strain 35000HP / ATCC 700724).